Consider the following 303-residue polypeptide: Probable 5-dehydro-4-deoxyglucarate dehydratase (303 aa).

Belongs to the DapA family.

The enzyme catalyses 5-dehydro-4-deoxy-D-glucarate + H(+) = 2,5-dioxopentanoate + CO2 + H2O. The protein operates within carbohydrate acid metabolism; D-glucarate degradation; 2,5-dioxopentanoate from D-glucarate: step 2/2. The chain is Probable 5-dehydro-4-deoxyglucarate dehydratase from Azotobacter vinelandii (strain DJ / ATCC BAA-1303).